Consider the following 202-residue polypeptide: Recombination protein RecR (202 aa).

The C4-type zinc-finger motif lies at Cys-56 to Cys-71. The Toprim domain occupies Thr-79 to Pro-179.

The protein belongs to the RecR family.

Its function is as follows. May play a role in DNA repair. It seems to be involved in an RecBC-independent recombinational process of DNA repair. It may act with RecF and RecO. This Nocardia farcinica (strain IFM 10152) protein is Recombination protein RecR.